Consider the following 391-residue polypeptide: Ethanol acetyltransferase 1 (391 aa).

The N-terminal 24 residues, 1–24 (MFFTKVLNNQVANGLKQLPVHKRV), are a transit peptide targeting the mitochondrion. The AB hydrolase-1 domain occupies 48–154 (PIVFVHGIFG…DNSPIEQPHI (107 aa)). Residues Ser-121, Asp-145, and His-295 each act as charge relay system in the active site.

The protein belongs to the AB hydrolase superfamily.

The protein localises to the mitochondrion. It catalyses the reaction ethanol + acetyl-CoA = ethyl acetate + CoA. The catalysed reaction is acetyl-CoA + H2O = acetate + CoA + H(+). The enzyme catalyses ethyl acetate + H2O = ethanol + acetate + H(+). By ethanol. Thioesterase and esterase reactions are highly repressed in the presence of high ethanol concentrations. Its function is as follows. Alcohol acetyltransferase that catalyzes the synthesis of ethyl acetate from ethanol and acetyl-CoA. Can also function as a thioesterase by hydrolyzing acetyl-CoA in the absence of ethanol, as well as esterase hydrolyzing ethyl acetate. The protein is Ethanol acetyltransferase 1 (EAT1) of Wickerhamomyces anomalus (strain ATCC 58044 / CBS 1984 / NCYC 433 / NRRL Y-366-8) (Yeast).